The sequence spans 122 residues: Large ribosomal subunit protein uL14 (122 aa).

This sequence belongs to the universal ribosomal protein uL14 family. As to quaternary structure, part of the 50S ribosomal subunit. Forms a cluster with proteins L3 and L19. In the 70S ribosome, L14 and L19 interact and together make contacts with the 16S rRNA in bridges B5 and B8.

In terms of biological role, binds to 23S rRNA. Forms part of two intersubunit bridges in the 70S ribosome. This chain is Large ribosomal subunit protein uL14, found in Shewanella woodyi (strain ATCC 51908 / MS32).